A 226-amino-acid chain; its full sequence is MRIKVCGIKRVEDAVMAAYCGADAIGLVVGRKHNSDDFIDKHLAQKIVRECPPYISPVLVTELDDAEEISGLVHETGVTSVQLHSDCTVDSIISLRKTFPNIKIIKNFHVIGPGVIHAMKPFESVVDAFILDTLDLANDKVGSTGLVHDWSISRKIVKEVSRPVILAGGLTPENVGEAIRVVNPYGVDASSGLKDSNGFKDEMKVINFVHRAKNDFFKVRNLSLEN.

It belongs to the TrpF family.

It carries out the reaction N-(5-phospho-beta-D-ribosyl)anthranilate = 1-(2-carboxyphenylamino)-1-deoxy-D-ribulose 5-phosphate. It participates in amino-acid biosynthesis; L-tryptophan biosynthesis; L-tryptophan from chorismate: step 3/5. In Methanosarcina mazei (strain ATCC BAA-159 / DSM 3647 / Goe1 / Go1 / JCM 11833 / OCM 88) (Methanosarcina frisia), this protein is N-(5'-phosphoribosyl)anthranilate isomerase 2 (trpF2).